We begin with the raw amino-acid sequence, 244 residues long: Phosphoadenosine 5'-phosphosulfate reductase (244 aa).

Cysteine 239 functions as the Nucleophile; cysteine thiosulfonate intermediate in the catalytic mechanism.

Belongs to the PAPS reductase family. CysH subfamily.

Its subcellular location is the cytoplasm. It catalyses the reaction [thioredoxin]-disulfide + sulfite + adenosine 3',5'-bisphosphate + 2 H(+) = [thioredoxin]-dithiol + 3'-phosphoadenylyl sulfate. The protein operates within sulfur metabolism; hydrogen sulfide biosynthesis; sulfite from sulfate: step 3/3. Functionally, catalyzes the formation of sulfite from phosphoadenosine 5'-phosphosulfate (PAPS) using thioredoxin as an electron donor. This chain is Phosphoadenosine 5'-phosphosulfate reductase, found in Enterobacter sp. (strain 638).